A 336-amino-acid chain; its full sequence is Corrinoid adenosyltransferase PduO (336 aa).

The interval 1-185 (MAIYTRTGDA…IIREVSKRYL (185 aa)) is pduON. Residues 194-336 (KETTPVALSF…IAAINVGTHQ (143 aa)) form a pduOC region. Heme is bound at residue histidine 207. Mg(2+)-binding residues include glutamate 215 and glutamine 218.

Belongs to the Cob(I)alamin adenosyltransferase family. PduO subfamily. As to quaternary structure, the C-terminal domain (PduOC) forms stable octamers and also crystallizes as an octamer. Forms a complex with PduS. Heme b serves as cofactor. The cofactor is Mg(2+).

The protein localises to the bacterial microcompartment. The enzyme catalyses cob(I)alamin-[corrinoid adenosyltransferase] + ATP = apo-[corrinoid adenosyltransferase] + adenosylcob(III)alamin + triphosphate. Its pathway is polyol metabolism; 1,2-propanediol degradation. The protein operates within cofactor biosynthesis; adenosylcobalamin biosynthesis. With respect to regulation, inhibited by ADP but not significantly by other nucleotides, inhibited by diphosphate and less well by triphosphate. Converts cob(I)alamin to adenosylcobalamin (adenosylcob(III)alamin), the cofactor for propanediol dehydratase. Found in the bacterial microcompartment (BMC) dedicated to 1,2-propanediol (1,2-PD) degradation. For adenosylcobalamin synthesis dATP can replace ATP, but no other nucleotides will substitute. PduS and PduO allow regeneration of the adenosylcobalamin cofactor within the BMC. In terms of biological role, the 1,2-PD-specific bacterial microcompartment (BMC) concentrates low levels of 1,2-PD catabolic enzymes, concentrates volatile reaction intermediates thus enhancing pathway flux and keeps the level of toxic, mutagenic propionaldehyde low. The protein is Corrinoid adenosyltransferase PduO of Salmonella typhimurium (strain LT2 / SGSC1412 / ATCC 700720).